Here is a 412-residue protein sequence, read N- to C-terminus: Ribosomal RNA large subunit methyltransferase G (412 aa).

The disordered stretch occupies residues 386–412 (KAEPHENGESSSDTPNPQSSLYGGVKR). Polar residues predominate over residues 394-406 (ESSSDTPNPQSSL).

This sequence belongs to the methyltransferase superfamily. RlmG family.

It localises to the cytoplasm. The catalysed reaction is guanosine(1835) in 23S rRNA + S-adenosyl-L-methionine = N(2)-methylguanosine(1835) in 23S rRNA + S-adenosyl-L-homocysteine + H(+). In terms of biological role, specifically methylates the guanine in position 1835 (m2G1835) of 23S rRNA. In Shewanella sediminis (strain HAW-EB3), this protein is Ribosomal RNA large subunit methyltransferase G.